A 398-amino-acid chain; its full sequence is 1-deoxy-D-xylulose 5-phosphate reductoisomerase (398 aa).

NADPH-binding residues include Thr-11, Gly-12, Ser-13, Ile-14, Arg-38, Asn-39, and Asn-125. 1-deoxy-D-xylulose 5-phosphate is bound at residue Lys-126. Glu-127 contributes to the NADPH binding site. Asp-151 contacts Mn(2+). Positions 152, 153, 179, and 202 each coordinate 1-deoxy-D-xylulose 5-phosphate. Glu-153 provides a ligand contact to Mn(2+). Gly-208 is a binding site for NADPH. Positions 215, 220, 221, and 224 each coordinate 1-deoxy-D-xylulose 5-phosphate. Glu-224 is a binding site for Mn(2+).

This sequence belongs to the DXR family. Requires Mg(2+) as cofactor. Mn(2+) is required as a cofactor.

It carries out the reaction 2-C-methyl-D-erythritol 4-phosphate + NADP(+) = 1-deoxy-D-xylulose 5-phosphate + NADPH + H(+). It functions in the pathway isoprenoid biosynthesis; isopentenyl diphosphate biosynthesis via DXP pathway; isopentenyl diphosphate from 1-deoxy-D-xylulose 5-phosphate: step 1/6. Its function is as follows. Catalyzes the NADPH-dependent rearrangement and reduction of 1-deoxy-D-xylulose-5-phosphate (DXP) to 2-C-methyl-D-erythritol 4-phosphate (MEP). This Burkholderia lata (strain ATCC 17760 / DSM 23089 / LMG 22485 / NCIMB 9086 / R18194 / 383) protein is 1-deoxy-D-xylulose 5-phosphate reductoisomerase.